A 192-amino-acid polypeptide reads, in one-letter code: Epididymal-specific lipocalin-12 (192 aa).

The signal sequence occupies residues 1 to 19 (MRLLCGLWLWLSLLKVLQA). Cys-88 and Cys-192 are disulfide-bonded.

The protein belongs to the calycin superfamily. Lipocalin family. Monomer.

It localises to the secreted. Its function is as follows. Binds all-trans retinoic acid and may act as a retinoid carrier protein within the epididymis. May play a role in male fertility. This chain is Epididymal-specific lipocalin-12 (LCN12), found in Homo sapiens (Human).